Reading from the N-terminus, the 249-residue chain is 3-deoxy-manno-octulosonate cytidylyltransferase (249 aa).

This sequence belongs to the KdsB family.

The protein localises to the cytoplasm. The catalysed reaction is 3-deoxy-alpha-D-manno-oct-2-ulosonate + CTP = CMP-3-deoxy-beta-D-manno-octulosonate + diphosphate. It participates in nucleotide-sugar biosynthesis; CMP-3-deoxy-D-manno-octulosonate biosynthesis; CMP-3-deoxy-D-manno-octulosonate from 3-deoxy-D-manno-octulosonate and CTP: step 1/1. It functions in the pathway bacterial outer membrane biogenesis; lipopolysaccharide biosynthesis. Its function is as follows. Activates KDO (a required 8-carbon sugar) for incorporation into bacterial lipopolysaccharide in Gram-negative bacteria. In Coxiella burnetii (strain RSA 331 / Henzerling II), this protein is 3-deoxy-manno-octulosonate cytidylyltransferase.